Consider the following 286-residue polypeptide: 33 kDa chaperonin (286 aa).

2 cysteine pairs are disulfide-bonded: Cys-225/Cys-227 and Cys-258/Cys-261.

This sequence belongs to the HSP33 family. In terms of processing, under oxidizing conditions two disulfide bonds are formed involving the reactive cysteines. Under reducing conditions zinc is bound to the reactive cysteines and the protein is inactive.

The protein localises to the cytoplasm. Functionally, redox regulated molecular chaperone. Protects both thermally unfolding and oxidatively damaged proteins from irreversible aggregation. Plays an important role in the bacterial defense system toward oxidative stress. This Shewanella baltica (strain OS223) protein is 33 kDa chaperonin.